A 98-amino-acid chain; its full sequence is NADH-ubiquinone oxidoreductase chain 4L (98 aa).

3 helical membrane-spanning segments follow: residues 1–21 (MIPT…GMLT), 27–47 (VASL…TALI), and 61–81 (IILL…LISI).

It belongs to the complex I subunit 4L family. As to quaternary structure, core subunit of respiratory chain NADH dehydrogenase (Complex I) which is composed of 45 different subunits.

It is found in the mitochondrion inner membrane. The enzyme catalyses a ubiquinone + NADH + 5 H(+)(in) = a ubiquinol + NAD(+) + 4 H(+)(out). In terms of biological role, core subunit of the mitochondrial membrane respiratory chain NADH dehydrogenase (Complex I) which catalyzes electron transfer from NADH through the respiratory chain, using ubiquinone as an electron acceptor. Part of the enzyme membrane arm which is embedded in the lipid bilayer and involved in proton translocation. This Macaca sylvanus (Barbary macaque) protein is NADH-ubiquinone oxidoreductase chain 4L (MT-ND4L).